A 474-amino-acid polypeptide reads, in one-letter code: Synaptotagmin-17 (474 aa).

The segment at 60-117 (WLMASRSNDKDGDSVHTASDVPLTPRTNSPDGRRSSSDTSKSTYSLTRRISSLDSRRP) is disordered. Residues 96–117 (SDTSKSTYSLTRRISSLDSRRP) are compositionally biased toward low complexity. A phosphoserine mark is found at serine 118 and serine 119. 2 consecutive C2 domains span residues 184 to 310 (QLGM…HWWK) and 321 to 455 (ELGE…EQWH).

Belongs to the synaptotagmin family. As to expression, expressed in brain and kidney.

It localises to the membrane. In terms of biological role, plays a role in dendrite formation by melanocytes. This chain is Synaptotagmin-17 (Syt17), found in Rattus norvegicus (Rat).